The chain runs to 255 residues: Fumarate reductase cytochrome b subunit (255 aa).

The next 5 helical transmembrane spans lie at 33–53, 78–98, 126–146, 168–188, and 208–228; these read TGLI…SILI, IVSV…FLAL, WFIQ…HLFV, FWLL…IGLY, and IKWA…GAYI. Heme b is bound by residues histidine 44, histidine 93, histidine 143, and histidine 182.

The protein belongs to the diheme cytochrome b FrdC family. In terms of assembly, part of an enzyme complex containing three subunits: a flavoprotein (frdA), an iron-sulfur protein (frdB), and diheme cytochrome b (frdC). Heme b is required as a cofactor.

The protein resides in the cell inner membrane. In terms of biological role, the fumarate reductase enzyme complex is required for fumarate respiration. This subunit anchors the complex in the membrane and binds a diheme cytochrome b. This chain is Fumarate reductase cytochrome b subunit (frdC), found in Helicobacter pylori (strain J99 / ATCC 700824) (Campylobacter pylori J99).